Consider the following 1672-residue polypeptide: Probable outer membrane protein PmpB (1672 aa).

The N-terminal stretch at 1-14 (MSSMKWLSATAVFA) is a signal peptide. 4 disordered regions span residues 69 to 122 (IPVK…GGAF), 203 to 263 (NTAE…GSGG), 384 to 415 (EAQTNKSSVTAASQSGPNTTPTPTPPVTAKGG), and 734 to 765 (STGVATTATTSQSPTVSSFLPRATAGSSPAPA). 3 stretches are compositionally biased toward low complexity: residues 77–88 (DDSSTSTPTTSS), 100–111 (SSSSSPNSGDTS), and 203–234 (NTAEVVPEETTPNPNPGTQTTTSQPSPTSKVQ). Composition is skewed to polar residues over residues 235–256 (SLFTYSSSTQANGNGADSQTPS) and 384–399 (EAQTNKSSVTAASQSG). Low complexity predominate over residues 734 to 744 (STGVATTATTS). Residues 1379–1672 (DDAAYNNFWV…MTSCGARMIF (294 aa)) form the Autotransporter domain.

It belongs to the PMP outer membrane protein family.

The protein localises to the secreted. Its subcellular location is the cell wall. It localises to the cell outer membrane. The polypeptide is Probable outer membrane protein PmpB (pmpB) (Chlamydia muridarum (strain MoPn / Nigg)).